Reading from the N-terminus, the 358-residue chain is Protein-glutamate methylesterase/protein-glutamine glutaminase 2 (358 aa).

Residues 8–125 (RVLIVDDSAV…ARGLEGYAEE (118 aa)) enclose the Response regulatory domain. A 4-aspartylphosphate modification is found at D59. A CheB-type methylesterase domain is found at 157-352 (PMPGSALRFR…LDRVAERLLA (196 aa)). Residues S177, H203, and D299 contribute to the active site.

This sequence belongs to the CheB family. Phosphorylated by CheA. Phosphorylation of the N-terminal regulatory domain activates the methylesterase activity.

The protein resides in the cytoplasm. The enzyme catalyses [protein]-L-glutamate 5-O-methyl ester + H2O = L-glutamyl-[protein] + methanol + H(+). It carries out the reaction L-glutaminyl-[protein] + H2O = L-glutamyl-[protein] + NH4(+). In terms of biological role, involved in chemotaxis. Part of a chemotaxis signal transduction system that modulates chemotaxis in response to various stimuli. Catalyzes the demethylation of specific methylglutamate residues introduced into the chemoreceptors (methyl-accepting chemotaxis proteins or MCP) by CheR. Also mediates the irreversible deamidation of specific glutamine residues to glutamic acid. This is Protein-glutamate methylesterase/protein-glutamine glutaminase 2 from Xanthomonas oryzae pv. oryzae (strain MAFF 311018).